The following is a 188-amino-acid chain: Ribosome maturation factor RimM (188 aa).

The PRC barrel domain occupies E93 to L166.

The protein belongs to the RimM family. As to quaternary structure, binds ribosomal protein uS19.

The protein localises to the cytoplasm. An accessory protein needed during the final step in the assembly of 30S ribosomal subunit, possibly for assembly of the head region. Essential for efficient processing of 16S rRNA. May be needed both before and after RbfA during the maturation of 16S rRNA. It has affinity for free ribosomal 30S subunits but not for 70S ribosomes. The protein is Ribosome maturation factor RimM of Streptomyces coelicolor (strain ATCC BAA-471 / A3(2) / M145).